We begin with the raw amino-acid sequence, 244 residues long: Cell division protein ZapD (244 aa).

The protein belongs to the ZapD family. In terms of assembly, interacts with FtsZ.

It localises to the cytoplasm. In terms of biological role, cell division factor that enhances FtsZ-ring assembly. Directly interacts with FtsZ and promotes bundling of FtsZ protofilaments, with a reduction in FtsZ GTPase activity. The sequence is that of Cell division protein ZapD from Shewanella baltica (strain OS185).